A 277-amino-acid polypeptide reads, in one-letter code: Thymidylate synthase (277 aa).

Arginine 27 is a binding site for dUMP. (6R)-5,10-methylene-5,6,7,8-tetrahydrofolate is bound at residue histidine 57. Arginine 132 to arginine 133 serves as a coordination point for dUMP. Residue cysteine 152 is the Nucleophile of the active site. DUMP is bound by residues arginine 179 to aspartate 182, asparagine 190, and histidine 220 to tyrosine 222. Aspartate 182 lines the (6R)-5,10-methylene-5,6,7,8-tetrahydrofolate pocket. Position 276 (alanine 276) interacts with (6R)-5,10-methylene-5,6,7,8-tetrahydrofolate.

It belongs to the thymidylate synthase family. Bacterial-type ThyA subfamily. As to quaternary structure, homodimer.

It localises to the cytoplasm. It carries out the reaction dUMP + (6R)-5,10-methylene-5,6,7,8-tetrahydrofolate = 7,8-dihydrofolate + dTMP. It participates in pyrimidine metabolism; dTTP biosynthesis. Its function is as follows. Catalyzes the reductive methylation of 2'-deoxyuridine-5'-monophosphate (dUMP) to 2'-deoxythymidine-5'-monophosphate (dTMP) while utilizing 5,10-methylenetetrahydrofolate (mTHF) as the methyl donor and reductant in the reaction, yielding dihydrofolate (DHF) as a by-product. This enzymatic reaction provides an intracellular de novo source of dTMP, an essential precursor for DNA biosynthesis. In Acidovorax sp. (strain JS42), this protein is Thymidylate synthase.